The chain runs to 103 residues: Large ribosomal subunit protein uL23 (103 aa).

Belongs to the universal ribosomal protein uL23 family. As to quaternary structure, part of the 50S ribosomal subunit. Contacts protein L29, and trigger factor when it is bound to the ribosome.

One of the early assembly proteins it binds 23S rRNA. One of the proteins that surrounds the polypeptide exit tunnel on the outside of the ribosome. Forms the main docking site for trigger factor binding to the ribosome. This is Large ribosomal subunit protein uL23 from Chlorobium chlorochromatii (strain CaD3).